Reading from the N-terminus, the 334-residue chain is L-lactate dehydrogenase B chain (334 aa).

Ala-2 bears the N-acetylalanine mark. Lys-7 carries the N6-acetyllysine modification. 31–53 (QVGMACAISILGKSLADELALVD) contributes to the NAD(+) binding site. The residue at position 44 (Ser-44) is a Phosphoserine. N6-acetyllysine is present on Lys-58. Arg-100 provides a ligand contact to NAD(+). Residue Arg-107 coordinates substrate. Residue Lys-119 is modified to N6-acetyllysine. Asn-139 is a binding site for NAD(+). 2 residues coordinate substrate: Asn-139 and Arg-170. The active-site Proton acceptor is His-194. Tyr-240 carries the phosphotyrosine modification. Thr-249 provides a ligand contact to substrate. Lys-329 carries the post-translational modification N6-acetyllysine.

Belongs to the LDH/MDH superfamily. LDH family. As to quaternary structure, homotetramer. Interacts with PTEN upstream reading frame protein MP31; the interaction leads to inhibition of mitochondrial lactate dehydrogenase activity, preventing conversion of lactate to pyruvate in mitochondria. In terms of tissue distribution, predominantly expressed in aerobic tissues such as cardiac muscle.

Its subcellular location is the cytoplasm. The protein localises to the mitochondrion inner membrane. It carries out the reaction (S)-lactate + NAD(+) = pyruvate + NADH + H(+). Its pathway is fermentation; pyruvate fermentation to lactate; (S)-lactate from pyruvate: step 1/1. Its function is as follows. Interconverts simultaneously and stereospecifically pyruvate and lactate with concomitant interconversion of NADH and NAD(+). The protein is L-lactate dehydrogenase B chain (LDHB) of Homo sapiens (Human).